We begin with the raw amino-acid sequence, 464 residues long: Glutamate--tRNA ligase (464 aa).

Residues 12–22 carry the 'HIGH' region motif; that stretch reads PSPTGYLHIGG. Positions 254 to 258 match the 'KMSKS' region motif; it reads KLSKR. ATP is bound at residue Lys-257.

This sequence belongs to the class-I aminoacyl-tRNA synthetase family. Glutamate--tRNA ligase type 1 subfamily. As to quaternary structure, monomer.

The protein resides in the cytoplasm. The catalysed reaction is tRNA(Glu) + L-glutamate + ATP = L-glutamyl-tRNA(Glu) + AMP + diphosphate. In terms of biological role, catalyzes the attachment of glutamate to tRNA(Glu) in a two-step reaction: glutamate is first activated by ATP to form Glu-AMP and then transferred to the acceptor end of tRNA(Glu). The polypeptide is Glutamate--tRNA ligase (Mycoplasma mobile (strain ATCC 43663 / 163K / NCTC 11711) (Mesomycoplasma mobile)).